We begin with the raw amino-acid sequence, 59 residues long: Large ribosomal subunit protein uL30 (59 aa).

Belongs to the universal ribosomal protein uL30 family. In terms of assembly, part of the 50S ribosomal subunit.

The polypeptide is Large ribosomal subunit protein uL30 (Stutzerimonas stutzeri (strain A1501) (Pseudomonas stutzeri)).